Reading from the N-terminus, the 227-residue chain is Phosphoribosylformylglycinamidine synthase subunit PurQ (227 aa).

The 225-residue stretch at 3–227 (FAVCVFPGSN…LMLWYSLLSD (225 aa)) folds into the Glutamine amidotransferase type-1 domain. Catalysis depends on C86, which acts as the Nucleophile. Residues H203 and E205 contribute to the active site.

Part of the FGAM synthase complex composed of 1 PurL, 1 PurQ and 2 PurS subunits.

The protein localises to the cytoplasm. It carries out the reaction N(2)-formyl-N(1)-(5-phospho-beta-D-ribosyl)glycinamide + L-glutamine + ATP + H2O = 2-formamido-N(1)-(5-O-phospho-beta-D-ribosyl)acetamidine + L-glutamate + ADP + phosphate + H(+). The catalysed reaction is L-glutamine + H2O = L-glutamate + NH4(+). Its pathway is purine metabolism; IMP biosynthesis via de novo pathway; 5-amino-1-(5-phospho-D-ribosyl)imidazole from N(2)-formyl-N(1)-(5-phospho-D-ribosyl)glycinamide: step 1/2. Part of the phosphoribosylformylglycinamidine synthase complex involved in the purines biosynthetic pathway. Catalyzes the ATP-dependent conversion of formylglycinamide ribonucleotide (FGAR) and glutamine to yield formylglycinamidine ribonucleotide (FGAM) and glutamate. The FGAM synthase complex is composed of three subunits. PurQ produces an ammonia molecule by converting glutamine to glutamate. PurL transfers the ammonia molecule to FGAR to form FGAM in an ATP-dependent manner. PurS interacts with PurQ and PurL and is thought to assist in the transfer of the ammonia molecule from PurQ to PurL. This is Phosphoribosylformylglycinamidine synthase subunit PurQ from Aquifex aeolicus (strain VF5).